The primary structure comprises 825 residues: ATP-dependent RNA helicase DBP4 (825 aa).

Positions Met-1–Asp-34 are disordered. A compositionally biased stretch (basic and acidic residues) spans Lys-19–Asp-34. The Q motif signature appears at Lys-53–Arg-81. Residues Ile-84 to Val-258 enclose the Helicase ATP-binding domain. Ala-97–Thr-104 is a binding site for ATP. A DEAD box motif is present at residues Asp-206 to Asp-209. Residues Lys-284–Leu-439 form the Helicase C-terminal domain. Disordered stretches follow at residues Asn-508 to Arg-536 and Ala-676 to Asp-825. Composition is skewed to basic and acidic residues over residues Glu-677–Ala-691 and Arg-700–Arg-714. 3 stretches are compositionally biased toward acidic residues: residues Gly-730 to Pro-739, Gly-761 to Val-770, and Met-805 to Glu-816.

It belongs to the DEAD box helicase family. DDX10/DBP4 subfamily. Interacts with the U3 and U14 snoRNAs. Associates with pre-ribosomal complexes.

Its subcellular location is the nucleus. It is found in the nucleolus. It carries out the reaction ATP + H2O = ADP + phosphate + H(+). In terms of biological role, ATP-dependent RNA helicase required for ribosome biogenesis. Involved in the release of U14 snoRNA in pre-ribosomal complexes. Required for pre-rRNA cleavage at site A2. In Chaetomium globosum (strain ATCC 6205 / CBS 148.51 / DSM 1962 / NBRC 6347 / NRRL 1970) (Soil fungus), this protein is ATP-dependent RNA helicase DBP4 (DBP4).